We begin with the raw amino-acid sequence, 386 residues long: Putative 8-amino-7-oxononanoate synthase (386 aa).

Residue arginine 22 coordinates substrate. Position 109–110 (109–110 (GY)) interacts with pyridoxal 5'-phosphate. Substrate is bound at residue histidine 134. Residues serine 182, 207-210 (DEAH), and 238-241 (TLSK) each bind pyridoxal 5'-phosphate. Lysine 241 carries the post-translational modification N6-(pyridoxal phosphate)lysine. Threonine 356 lines the substrate pocket.

Belongs to the class-II pyridoxal-phosphate-dependent aminotransferase family. BioF subfamily. In terms of assembly, homodimer. It depends on pyridoxal 5'-phosphate as a cofactor.

It carries out the reaction 6-carboxyhexanoyl-[ACP] + L-alanine + H(+) = (8S)-8-amino-7-oxononanoate + holo-[ACP] + CO2. Its pathway is cofactor biosynthesis; biotin biosynthesis. In terms of biological role, catalyzes the decarboxylative condensation of pimeloyl-[acyl-carrier protein] and L-alanine to produce 8-amino-7-oxononanoate (AON), [acyl-carrier protein], and carbon dioxide. This is Putative 8-amino-7-oxononanoate synthase (bioF) from Nostoc sp. (strain PCC 7120 / SAG 25.82 / UTEX 2576).